Reading from the N-terminus, the 474-residue chain is UDP-N-acetylmuramate--L-alanine ligase (474 aa).

ATP is bound at residue 123–129; it reads GTHGKTT.

Belongs to the MurCDEF family.

The protein localises to the cytoplasm. The catalysed reaction is UDP-N-acetyl-alpha-D-muramate + L-alanine + ATP = UDP-N-acetyl-alpha-D-muramoyl-L-alanine + ADP + phosphate + H(+). It functions in the pathway cell wall biogenesis; peptidoglycan biosynthesis. In terms of biological role, cell wall formation. The chain is UDP-N-acetylmuramate--L-alanine ligase from Alcanivorax borkumensis (strain ATCC 700651 / DSM 11573 / NCIMB 13689 / SK2).